The primary structure comprises 210 residues: Probable GTP-binding protein EngB (210 aa).

In terms of domain architecture, EngB-type G spans 25 to 199; the sequence is TGIEVAFAGR…RQKLDTWFSE (175 aa). GTP-binding positions include 33 to 40, 60 to 64, 78 to 81, 145 to 148, and 178 to 180; these read GRSNAGKS, GRTQL, DLPG, TKAD, and FSS. The Mg(2+) site is built by Ser40 and Thr62.

This sequence belongs to the TRAFAC class TrmE-Era-EngA-EngB-Septin-like GTPase superfamily. EngB GTPase family. Mg(2+) serves as cofactor.

In terms of biological role, necessary for normal cell division and for the maintenance of normal septation. In Shigella boydii serotype 4 (strain Sb227), this protein is Probable GTP-binding protein EngB.